The following is a 163-amino-acid chain: MSTETIEIFNNSDEWANQLKHALSKGENLALLHGLTPDILDRIYAYAFDYHEKGNITDAEIYYKFLCIYAFENHEYLKDFASVCQPKKKYQQAYDLYKLSYNYFPYDDYSVIYRMGQCQIGAKNIDNAMQCFYHIINNCEDDSVKSKAQAYIELLNDNSEDNG.

Belongs to the LcrH/SycD chaperone family.

This is an uncharacterized protein from Escherichia coli (strain K12).